The primary structure comprises 377 residues: WAT1-related protein At5g13670 (377 aa).

Helical transmembrane passes span 9–29, 38–58, 64–84, 99–119, 136–156, 187–207, 214–234, 251–271, 279–299, and 303–323; these read FIAIVFIQCLYALMSIVAKLA, VLVAYRMAVASALITPFALIL, PKLTFKILLQIAILSLFEPVV, TFTSALCNALPAMTFIMACVF, VGTMVAIGGAMLMTFVKGNVI, IMLVASCFSWSCYIILQAKIL, LSLTALMCIMGMLEATVMGLI, LLASIYGGLVSGLAYYVIGWA, FVSAFNPLSMVLVAILSTFVF, and VYVGRVIGSVVIVIGIYLVLW. EamA domains follow at residues 18–149 and 194–322; these read LYAL…MLMT and FSWS…YLVL.

It belongs to the drug/metabolite transporter (DMT) superfamily. Plant drug/metabolite exporter (P-DME) (TC 2.A.7.4) family.

It is found in the membrane. This Arabidopsis thaliana (Mouse-ear cress) protein is WAT1-related protein At5g13670.